A 226-amino-acid chain; its full sequence is 2-C-methyl-D-erythritol 4-phosphate cytidylyltransferase (226 aa).

The protein belongs to the IspD/TarI cytidylyltransferase family. IspD subfamily.

It catalyses the reaction 2-C-methyl-D-erythritol 4-phosphate + CTP + H(+) = 4-CDP-2-C-methyl-D-erythritol + diphosphate. It participates in isoprenoid biosynthesis; isopentenyl diphosphate biosynthesis via DXP pathway; isopentenyl diphosphate from 1-deoxy-D-xylulose 5-phosphate: step 2/6. In terms of biological role, catalyzes the formation of 4-diphosphocytidyl-2-C-methyl-D-erythritol from CTP and 2-C-methyl-D-erythritol 4-phosphate (MEP). In Thermosipho africanus (strain TCF52B), this protein is 2-C-methyl-D-erythritol 4-phosphate cytidylyltransferase.